A 516-amino-acid chain; its full sequence is Arginyl-tRNA--protein transferase 1 (516 aa).

Residues 150-180 show a composition bias toward basic and acidic residues; it reads IESEEKEKEKSIKKEGSKEFIHPQSIEEKLG. A disordered region spans residues 150 to 206; it reads IESEEKEKEKSIKKEGSKEFIHPQSIEEKLGSGEPSHPIKVHIGPKPGKGADLSKPP.

This sequence belongs to the R-transferase family. Monomer. Interacts with LIAT1; LIAT1 is not a substrate of ATE1, the interaction takes place in the cytoplasm and seems to increase ATE1 arginyltransferase activity. As to quaternary structure, interacts with LIAT1; has a higher affinity than the other isoforms. Widely expressed.

It is found in the nucleus. It localises to the cytoplasm. The catalysed reaction is an N-terminal L-alpha-aminoacyl-[protein] + L-arginyl-tRNA(Arg) = an N-terminal L-arginyl-L-aminoacyl-[protein] + tRNA(Arg) + H(+). Its function is as follows. Involved in the post-translational conjugation of arginine to the N-terminal aspartate or glutamate of a protein. This arginylation is required for degradation of the protein via the ubiquitin pathway. Does not arginylate cysteine residues. This chain is Arginyl-tRNA--protein transferase 1, found in Mus musculus (Mouse).